A 139-amino-acid chain; its full sequence is Gas vesicle protein A (139 aa).

The interval 113 to 139 (EKLGDMLTSDEPEPRKATRVRSRRADR) is disordered. The span at 129 to 139 (ATRVRSRRADR) shows a compositional bias: basic residues.

This sequence belongs to the gas vesicle GvpA family. In terms of assembly, the gas vesicle shell is 2 nm thick and consists of a single layer of this protein. It forms helical ribs nearly perpendicular to the long axis of the vesicle.

It localises to the gas vesicle shell. Gas vesicles are hollow, gas filled proteinaceous nanostructures found in some microorganisms. During planktonic growth they allow positioning of the organism at a favorable depth for light or nutrient acquisition. GvpA forms the protein shell. The chain is Gas vesicle protein A from Mycobacterium sp. (strain JLS).